A 244-amino-acid chain; its full sequence is Mitochondrial import inner membrane translocase subunit Tim21 (244 aa).

The N-terminal 18 residues, 1–18 (MICAFLRVVQHAEKLHGS), are a transit peptide targeting the mitochondrion. Residues 65–96 (TQGPDPRKAKEDSTKQVSIRRNQREETGVSMS) are disordered. The segment covering 69-78 (DPRKAKEDST) has biased composition (basic and acidic residues). Residues 107–127 (SYLIVVLFGVGLTGGLLYAIF) traverse the membrane as a helical segment.

This sequence belongs to the TIM21 family. In terms of assembly, component of the TIM23 complex. Component of the MITRAC (mitochondrial translation regulation assembly intermediate of cytochrome c oxidase complex) complex, the core components of this complex being COA3/MITRAC12 and COX14. Interacts with COA3 and MT-CO1/COX1.

The protein localises to the mitochondrion membrane. Its function is as follows. Participates in the translocation of transit peptide-containing proteins across the mitochondrial inner membrane. Also required for assembly of mitochondrial respiratory chain complex I and complex IV as component of the MITRAC (mitochondrial translation regulation assembly intermediate of cytochrome c oxidase complex) complex. Probably shuttles between the presequence translocase and respiratory-chain assembly intermediates in a process that promotes incorporation of early nuclear-encoded subunits into these complexes. The sequence is that of Mitochondrial import inner membrane translocase subunit Tim21 (Timm21) from Mus musculus (Mouse).